Reading from the N-terminus, the 100-residue chain is Urease subunit gamma (100 aa).

This sequence belongs to the urease gamma subunit family. As to quaternary structure, heterotrimer of UreA (gamma), UreB (beta) and UreC (alpha) subunits. Three heterotrimers associate to form the active enzyme.

It is found in the cytoplasm. The enzyme catalyses urea + 2 H2O + H(+) = hydrogencarbonate + 2 NH4(+). It participates in nitrogen metabolism; urea degradation; CO(2) and NH(3) from urea (urease route): step 1/1. In Streptomyces griseus subsp. griseus (strain JCM 4626 / CBS 651.72 / NBRC 13350 / KCC S-0626 / ISP 5235), this protein is Urease subunit gamma.